The primary structure comprises 108 residues: uncharacterized protein (108 aa).

Residue Thr-56 is modified to Phosphothreonine. The tract at residues 89 to 108 (AQAKGTEQAEALKKGTSKWF) is disordered.

The protein resides in the cytoplasm. This is an uncharacterized protein from Schizosaccharomyces pombe (strain 972 / ATCC 24843) (Fission yeast).